Reading from the N-terminus, the 363-residue chain is UDP-N-acetylglucosamine--N-acetylmuramyl-(pentapeptide) pyrophosphoryl-undecaprenol N-acetylglucosamine transferase (363 aa).

Residues 7–9 (TGG), asparagine 125, serine 196, isoleucine 251, and glutamine 296 contribute to the UDP-N-acetyl-alpha-D-glucosamine site.

This sequence belongs to the glycosyltransferase 28 family. MurG subfamily.

It is found in the cell membrane. The catalysed reaction is Mur2Ac(oyl-L-Ala-gamma-D-Glu-L-Lys-D-Ala-D-Ala)-di-trans,octa-cis-undecaprenyl diphosphate + UDP-N-acetyl-alpha-D-glucosamine = beta-D-GlcNAc-(1-&gt;4)-Mur2Ac(oyl-L-Ala-gamma-D-Glu-L-Lys-D-Ala-D-Ala)-di-trans,octa-cis-undecaprenyl diphosphate + UDP + H(+). Its pathway is cell wall biogenesis; peptidoglycan biosynthesis. Its function is as follows. Cell wall formation. Catalyzes the transfer of a GlcNAc subunit on undecaprenyl-pyrophosphoryl-MurNAc-pentapeptide (lipid intermediate I) to form undecaprenyl-pyrophosphoryl-MurNAc-(pentapeptide)GlcNAc (lipid intermediate II). This is UDP-N-acetylglucosamine--N-acetylmuramyl-(pentapeptide) pyrophosphoryl-undecaprenol N-acetylglucosamine transferase from Latilactobacillus sakei subsp. sakei (strain 23K) (Lactobacillus sakei subsp. sakei).